The sequence spans 82 residues: Cell division topological specificity factor (82 aa).

Belongs to the MinE family.

In terms of biological role, prevents the cell division inhibition by proteins MinC and MinD at internal division sites while permitting inhibition at polar sites. This ensures cell division at the proper site by restricting the formation of a division septum at the midpoint of the long axis of the cell. In Buchnera aphidicola subsp. Cinara cedri (strain Cc), this protein is Cell division topological specificity factor.